A 290-amino-acid chain; its full sequence is Protease HtpX (290 aa).

A run of 2 helical transmembrane segments spans residues 12 to 32 and 42 to 62; these read IAVM…GLLA and ALLV…LLIS. His-147 contributes to the Zn(2+) binding site. Glu-148 is a catalytic residue. His-151 contacts Zn(2+). 2 helical membrane-spanning segments follow: residues 162-182 and 197-217; these read LIQG…GHVV and FWIV…MIVM. Glu-224 serves as a coordination point for Zn(2+).

It belongs to the peptidase M48B family. Requires Zn(2+) as cofactor.

It is found in the cell inner membrane. The polypeptide is Protease HtpX (Pseudoalteromonas atlantica (strain T6c / ATCC BAA-1087)).